Here is a 166-residue protein sequence, read N- to C-terminus: Phosphopantetheine adenylyltransferase (166 aa).

Ser10 contributes to the substrate binding site. ATP-binding positions include Ser10–Phe11 and His18. Lys42, Ala79, and Arg93 together coordinate substrate. ATP-binding positions include Gly94–Arg96, Glu104, and Val129–Thr135.

The protein belongs to the bacterial CoaD family. In terms of assembly, homohexamer. Requires Mg(2+) as cofactor.

Its subcellular location is the cytoplasm. It carries out the reaction (R)-4'-phosphopantetheine + ATP + H(+) = 3'-dephospho-CoA + diphosphate. The protein operates within cofactor biosynthesis; coenzyme A biosynthesis; CoA from (R)-pantothenate: step 4/5. Reversibly transfers an adenylyl group from ATP to 4'-phosphopantetheine, yielding dephospho-CoA (dPCoA) and pyrophosphate. In Methylobacterium nodulans (strain LMG 21967 / CNCM I-2342 / ORS 2060), this protein is Phosphopantetheine adenylyltransferase.